The primary structure comprises 185 residues: Endoribonuclease YbeY (185 aa).

His-142, His-146, and His-152 together coordinate Zn(2+).

It belongs to the endoribonuclease YbeY family. The cofactor is Zn(2+).

The protein resides in the cytoplasm. Functionally, single strand-specific metallo-endoribonuclease involved in late-stage 70S ribosome quality control and in maturation of the 3' terminus of the 16S rRNA. The polypeptide is Endoribonuclease YbeY (Parvibaculum lavamentivorans (strain DS-1 / DSM 13023 / NCIMB 13966)).